We begin with the raw amino-acid sequence, 184 residues long: 3-hydroxydecanoyl-[acyl-carrier-protein] dehydratase (184 aa).

Residue His-77 is part of the active site.

It belongs to the thioester dehydratase family. FabA subfamily. Homodimer.

It is found in the cytoplasm. The catalysed reaction is a (3R)-hydroxyacyl-[ACP] = a (2E)-enoyl-[ACP] + H2O. It catalyses the reaction (3R)-hydroxydecanoyl-[ACP] = (2E)-decenoyl-[ACP] + H2O. It carries out the reaction (2E)-decenoyl-[ACP] = (3Z)-decenoyl-[ACP]. Its pathway is lipid metabolism; fatty acid biosynthesis. Its function is as follows. Necessary for the introduction of cis unsaturation into fatty acids. Catalyzes the dehydration of (3R)-3-hydroxydecanoyl-ACP to E-(2)-decenoyl-ACP and then its isomerization to Z-(3)-decenoyl-ACP. Can catalyze the dehydratase reaction for beta-hydroxyacyl-ACPs with saturated chain lengths up to 16:0, being most active on intermediate chain length. This is 3-hydroxydecanoyl-[acyl-carrier-protein] dehydratase from Hyphomonas neptunium (strain ATCC 15444).